The following is a 292-amino-acid chain: Expansin-B11 (292 aa).

Positions 1–27 (MAKSCTLVLLLVALVGLSLLVSPIACS) are cleaved as a signal peptide. A glycan (N-linked (GlcNAc...) asparagine) is linked at N51. One can recognise an Expansin-like EG45 domain in the interval 82–192 (GGACGYQTAV…RRVPCKYSGV (111 aa)). 3 disulfides stabilise this stretch: C85–C114, C117–C187, and C122–C128. An Expansin-like CBD domain is found at 205-287 (FYFEVLIEFE…SWKPGVTYRS (83 aa)).

It belongs to the expansin family. Expansin B subfamily. Expressed in internodes.

The protein resides in the secreted. Its subcellular location is the cell wall. The protein localises to the membrane. May cause loosening and extension of plant cell walls by disrupting non-covalent bonding between cellulose microfibrils and matrix glucans. No enzymatic activity has been found. May be required for rapid internodal elongation in deepwater rice during submergence. The polypeptide is Expansin-B11 (EXPB11) (Oryza sativa subsp. japonica (Rice)).